A 230-amino-acid polypeptide reads, in one-letter code: 2,3-bisphosphoglycerate-dependent phosphoglycerate mutase (230 aa).

Substrate contacts are provided by residues 8 to 15, 21 to 22, Arg-60, 87 to 90, Lys-98, and 114 to 115; these read RHGQSIWN, TG, ERHY, and RR. His-9 functions as the Tele-phosphohistidine intermediate in the catalytic mechanism. Glu-87 functions as the Proton donor/acceptor in the catalytic mechanism. The interval 117 to 143 is disordered; that stretch reads YDTPPPALDAEDERHPRHDPRYAGLDP. Basic and acidic residues predominate over residues 128–137; that stretch reads DERHPRHDPR. 183–184 provides a ligand contact to substrate; it reads GN.

Belongs to the phosphoglycerate mutase family. BPG-dependent PGAM subfamily. In terms of assembly, homodimer.

The catalysed reaction is (2R)-2-phosphoglycerate = (2R)-3-phosphoglycerate. It participates in carbohydrate degradation; glycolysis; pyruvate from D-glyceraldehyde 3-phosphate: step 3/5. Catalyzes the interconversion of 2-phosphoglycerate and 3-phosphoglycerate. This is 2,3-bisphosphoglycerate-dependent phosphoglycerate mutase from Halorhodospira halophila (strain DSM 244 / SL1) (Ectothiorhodospira halophila (strain DSM 244 / SL1)).